A 56-amino-acid chain; its full sequence is Large ribosomal subunit protein bL33 (56 aa).

The protein belongs to the bacterial ribosomal protein bL33 family.

This is Large ribosomal subunit protein bL33 (rpmG) from Rickettsia prowazekii (strain Madrid E).